The primary structure comprises 269 residues: Shikimate dehydrogenase (NADP(+)) (269 aa).

Residues 17-19 (SKS) and Thr64 each bind shikimate. The active-site Proton acceptor is the Lys68. Glu80 is a binding site for NADP(+). Residues Asn89 and Asp105 each contribute to the shikimate site. NADP(+) is bound by residues 130-134 (GAGGA), 154-159 (NRTRAK), and Met213. Residue Tyr215 coordinates shikimate. Gly237 is a binding site for NADP(+).

It belongs to the shikimate dehydrogenase family. Homodimer.

It carries out the reaction shikimate + NADP(+) = 3-dehydroshikimate + NADPH + H(+). Its pathway is metabolic intermediate biosynthesis; chorismate biosynthesis; chorismate from D-erythrose 4-phosphate and phosphoenolpyruvate: step 4/7. Functionally, involved in the biosynthesis of the chorismate, which leads to the biosynthesis of aromatic amino acids. Catalyzes the reversible NADPH linked reduction of 3-dehydroshikimate (DHSA) to yield shikimate (SA). The chain is Shikimate dehydrogenase (NADP(+)) from Neisseria meningitidis serogroup C / serotype 2a (strain ATCC 700532 / DSM 15464 / FAM18).